Reading from the N-terminus, the 241-residue chain is Keratin-associated protein 5-5 (241 aa).

15 tandem repeats follow at residues 35 to 38 (CCKP), 41 to 44 (CCKP), 47 to 50 (CCVP), 105 to 108 (CCKP), 115 to 118 (CCKP), 133 to 136 (CCKP), 143 to 146 (CCKP), 161 to 164 (CCKP), 171 to 174 (CCKP), 181 to 184 (CCKP), 191 to 194 (CCKP), 201 to 204 (CCKP), 211 to 214 (CCKP), 221 to 224 (CCKP), and 231 to 234 (CCAP). A 15 X 4 AA repeats of C-C-X-P region spans residues 35 to 234 (CCKPVCCCKP…CCCQSSCCAP (200 aa)).

It belongs to the KRTAP type 5 family. As to quaternary structure, interacts with hair keratins.

In the hair cortex, hair keratin intermediate filaments are embedded in an interfilamentous matrix, consisting of hair keratin-associated protein (KRTAP), which are essential for the formation of a rigid and resistant hair shaft through their extensive disulfide bond cross-linking with abundant cysteine residues of hair keratins. The matrix proteins include the high-sulfur and high-glycine-tyrosine keratins. The polypeptide is Keratin-associated protein 5-5 (Mus musculus (Mouse)).